The primary structure comprises 209 residues: Uracil phosphoribosyltransferase (209 aa).

5-phospho-alpha-D-ribose 1-diphosphate-binding positions include R79, R104, and 131-139; that span reads DPMLATGGS. Uracil contacts are provided by residues I194 and 199 to 201; that span reads GDA. A 5-phospho-alpha-D-ribose 1-diphosphate-binding site is contributed by D200.

It belongs to the UPRTase family. Mg(2+) serves as cofactor.

It carries out the reaction UMP + diphosphate = 5-phospho-alpha-D-ribose 1-diphosphate + uracil. It functions in the pathway pyrimidine metabolism; UMP biosynthesis via salvage pathway; UMP from uracil: step 1/1. Allosterically activated by GTP. In terms of biological role, catalyzes the conversion of uracil and 5-phospho-alpha-D-ribose 1-diphosphate (PRPP) to UMP and diphosphate. This Lysinibacillus sphaericus (strain C3-41) protein is Uracil phosphoribosyltransferase.